A 429-amino-acid chain; its full sequence is Probable E3 ubiquitin-protein ligase makorin-1 (429 aa).

C3H1-type zinc fingers lie at residues 18 to 45 (WTKH…HDLT), 48 to 75 (KPAA…HCKP), and 153 to 180 (ELRK…HGDV). The tract at residues 181–208 (CDMCGLQVLHPTDSSQRSEHTKACIEAH) is makorin-type Cys-His. The RING-type zinc-finger motif lies at 226 to 280 (CGVCMEVVFEKANPSERRFGILSNCSHCYCLKCIRKWRSAKQFESKIIKSCPECR). The C3H1-type 4 zinc finger occupies 309–338 (GMGRKPCRYFDEGRGICPFGANCFYKHAFP). The disordered stretch occupies residues 343 to 362 (EEAQPQRRQTGSSSRNRNSR). Residues 348–358 (QRRQTGSSSRN) show a composition bias toward low complexity.

It catalyses the reaction S-ubiquitinyl-[E2 ubiquitin-conjugating enzyme]-L-cysteine + [acceptor protein]-L-lysine = [E2 ubiquitin-conjugating enzyme]-L-cysteine + N(6)-ubiquitinyl-[acceptor protein]-L-lysine.. It participates in protein modification; protein ubiquitination. In terms of biological role, E3 ubiquitin ligase catalyzing the covalent attachment of ubiquitin moieties onto substrate proteins. In Takifugu rubripes (Japanese pufferfish), this protein is Probable E3 ubiquitin-protein ligase makorin-1.